Here is a 445-residue protein sequence, read N- to C-terminus: Tubulin beta-4 chain (445 aa).

An MREI motif motif is present at residues 1–4 (MREI). Gln11, Glu69, Ser138, Gly142, Thr143, Gly144, Asn204, and Asn226 together coordinate GTP. Glu69 serves as a coordination point for Mg(2+). The disordered stretch occupies residues 425 to 445 (YQDATAEEEGEFEEGEEEENA). Positions 429–445 (TAEEEGEFEEGEEEENA) are enriched in acidic residues. The residue at position 438 (Glu438) is a 5-glutamyl polyglutamate.

Belongs to the tubulin family. Dimer of alpha and beta chains. A typical microtubule is a hollow water-filled tube with an outer diameter of 25 nm and an inner diameter of 15 nM. Alpha-beta heterodimers associate head-to-tail to form protofilaments running lengthwise along the microtubule wall with the beta-tubulin subunit facing the microtubule plus end conferring a structural polarity. Microtubules usually have 13 protofilaments but different protofilament numbers can be found in some organisms and specialized cells. It depends on Mg(2+) as a cofactor. Some glutamate residues at the C-terminus are polyglycylated, resulting in polyglycine chains on the gamma-carboxyl group. Glycylation is mainly limited to tubulin incorporated into axonemes (cilia and flagella) whereas glutamylation is prevalent in neuronal cells, centrioles, axonemes, and the mitotic spindle. Both modifications can coexist on the same protein on adjacent residues, and lowering polyglycylation levels increases polyglutamylation, and reciprocally. The precise function of polyglycylation is still unclear. In terms of processing, some glutamate residues at the C-terminus are polyglutamylated, resulting in polyglutamate chains on the gamma-carboxyl group. Polyglutamylation plays a key role in microtubule severing by spastin (SPAST). SPAST preferentially recognizes and acts on microtubules decorated with short polyglutamate tails: severing activity by SPAST increases as the number of glutamates per tubulin rises from one to eight, but decreases beyond this glutamylation threshold. In terms of tissue distribution, preferential expression in germ cells.

Its subcellular location is the cytoplasm. The protein resides in the cytoskeleton. Its function is as follows. Tubulin is the major constituent of microtubules, a cylinder consisting of laterally associated linear protofilaments composed of alpha- and beta-tubulin heterodimers. Microtubules grow by the addition of GTP-tubulin dimers to the microtubule end, where a stabilizing cap forms. Below the cap, tubulin dimers are in GDP-bound state, owing to GTPase activity of alpha-tubulin. This chain is Tubulin beta-4 chain (tubb4), found in Xenopus laevis (African clawed frog).